Here is a 78-residue protein sequence, read N- to C-terminus: Large ribosomal subunit protein bL31 (78 aa).

This sequence belongs to the bacterial ribosomal protein bL31 family. Type A subfamily. As to quaternary structure, part of the 50S ribosomal subunit.

Functionally, binds the 23S rRNA. The sequence is that of Large ribosomal subunit protein bL31 (rpmE) from Rickettsia typhi (strain ATCC VR-144 / Wilmington).